Consider the following 352-residue polypeptide: Thiamine-monophosphate kinase (352 aa).

Mg(2+) contacts are provided by aspartate 58, threonine 73, and aspartate 75. Histidine 82 contributes to the substrate binding site. Residues aspartate 103 and aspartate 151 each coordinate Mg(2+). ATP-binding positions include 150-151 (GD) and arginine 177. Aspartate 239 is a binding site for Mg(2+). Serine 241 is an ATP binding site. A Mg(2+)-binding site is contributed by aspartate 242. The substrate site is built by aspartate 294 and tryptophan 349.

This sequence belongs to the thiamine-monophosphate kinase family.

It carries out the reaction thiamine phosphate + ATP = thiamine diphosphate + ADP. Its pathway is cofactor biosynthesis; thiamine diphosphate biosynthesis; thiamine diphosphate from thiamine phosphate: step 1/1. Functionally, catalyzes the ATP-dependent phosphorylation of thiamine-monophosphate (TMP) to form thiamine-pyrophosphate (TPP), the active form of vitamin B1. The polypeptide is Thiamine-monophosphate kinase (Caulobacter vibrioides (strain ATCC 19089 / CIP 103742 / CB 15) (Caulobacter crescentus)).